The primary structure comprises 432 residues: C4-dicarboxylate transport protein (432 aa).

Helical transmembrane passes span 8–28 (ILYV…HYWP), 44–64 (LIKM…IAGM), 78–98 (LLYF…AAHL), 148–168 (GDIL…AVLG), 188–208 (IVHV…AFTI), 222–242 (LIGT…GTIA), 307–327 (IYMT…LTLM), and 355–375 (AATL…ILGI).

The protein belongs to the dicarboxylate/amino acid:cation symporter (DAACS) (TC 2.A.23) family.

It is found in the cell inner membrane. Responsible for the transport of dicarboxylates such as succinate, fumarate, and malate from the periplasm across the membrane. The polypeptide is C4-dicarboxylate transport protein (Cupriavidus necator (strain ATCC 17699 / DSM 428 / KCTC 22496 / NCIMB 10442 / H16 / Stanier 337) (Ralstonia eutropha)).